The following is a 360-amino-acid chain: Dihydroorotate dehydrogenase (quinone) (360 aa).

Residues 66 to 70 (AGFDK) and T90 each bind FMN. K70 is a binding site for substrate. 115-119 (NRMGF) contacts substrate. FMN contacts are provided by N143 and N176. N176 lines the substrate pocket. Residue S179 is the Nucleophile of the active site. N181 lines the substrate pocket. The FMN site is built by K212 and T240. Residue 241-242 (NT) participates in substrate binding. Residues G264, G293, and 314-315 (YT) contribute to the FMN site.

It belongs to the dihydroorotate dehydrogenase family. Type 2 subfamily. In terms of assembly, monomer. FMN serves as cofactor.

The protein localises to the cell membrane. The enzyme catalyses (S)-dihydroorotate + a quinone = orotate + a quinol. It functions in the pathway pyrimidine metabolism; UMP biosynthesis via de novo pathway; orotate from (S)-dihydroorotate (quinone route): step 1/1. Catalyzes the conversion of dihydroorotate to orotate with quinone as electron acceptor. This Mycobacterium marinum (strain ATCC BAA-535 / M) protein is Dihydroorotate dehydrogenase (quinone).